The primary structure comprises 161 residues: Nucleotide-binding protein Vapar_3769 (161 aa).

This sequence belongs to the YajQ family.

Functionally, nucleotide-binding protein. This Variovorax paradoxus (strain S110) protein is Nucleotide-binding protein Vapar_3769.